The chain runs to 62 residues: uncharacterized protein (62 aa).

This is an uncharacterized protein from Acidianus filamentous virus 2 (isolate Italy/Pozzuoli) (AFV-2).